The chain runs to 371 residues: Putative F-box protein At1g58090 (371 aa).

The 46-residue stretch at 1–46 (MVSKKLPLDLEEEILFRVPPRSLVRFRSVCREWNTLFKNKRFINKN) folds into the F-box domain.

In Arabidopsis thaliana (Mouse-ear cress), this protein is Putative F-box protein At1g58090.